A 35-amino-acid polypeptide reads, in one-letter code: Flavodoxin (35 aa).

Residues 4–35 (IGLFYGTZTGKTESVAEIIDEFGDEVVTLDID) form the Flavodoxin-like domain.

This sequence belongs to the flavodoxin family. It depends on FMN as a cofactor.

Its function is as follows. Low-potential electron donor to a number of redox enzymes. The protein is Flavodoxin of Nostoc sp. (strain MAC).